Consider the following 412-residue polypeptide: Type II methyltransferase M.Sau3AI (412 aa).

The SAM-dependent MTase C5-type domain maps to 4 to 402 (IKVVELFAGV…NQIEKIDSIT (399 aa)). Cysteine 85 is an active-site residue.

This sequence belongs to the class I-like SAM-binding methyltransferase superfamily. C5-methyltransferase family.

The enzyme catalyses a 2'-deoxycytidine in DNA + S-adenosyl-L-methionine = a 5-methyl-2'-deoxycytidine in DNA + S-adenosyl-L-homocysteine + H(+). A methylase that recognizes the double-stranded sequence 5'-GATC-3', methylates C-4 on both strands and protects the DNA from cleavage by the Sau3AI endonuclease. The polypeptide is Type II methyltransferase M.Sau3AI (sau3AIM) (Staphylococcus aureus).